A 61-amino-acid polypeptide reads, in one-letter code: Probable tautomerase LL0574 (61 aa).

P2 (proton acceptor; via imino nitrogen) is an active-site residue.

It belongs to the 4-oxalocrotonate tautomerase family.

The polypeptide is Probable tautomerase LL0574 (Lactococcus lactis subsp. lactis (strain IL1403) (Streptococcus lactis)).